A 208-amino-acid polypeptide reads, in one-letter code: Methyl-CpG-binding domain protein 3-like 2 (208 aa).

Residues 1-89 (MGEPAFTSFP…HLEKPQQLCA (89 aa)) form an interacts with MBD3 region.

This sequence belongs to the MBD3L family. Interacts (via N-terminus) with MBD3; the interaction is direct. Interacts with MTA1. Interacts with HDAC1. Interacts with HDAC2. Interacts with RBBP4. Interacts with RBBP7. As to expression, detected at low levels in several somatic tissues. Highly expressed in the ovarian teratocarcinoma cell line PA-1.

The protein resides in the nucleus. Its function is as follows. May displace the NuRD complex from chromatin. In Homo sapiens (Human), this protein is Methyl-CpG-binding domain protein 3-like 2 (MBD3L2).